A 174-amino-acid polypeptide reads, in one-letter code: 2-C-methyl-D-erythritol 2,4-cyclodiphosphate synthase (174 aa).

A divalent metal cation contacts are provided by aspartate 13, histidine 15, and histidine 61. 13 to 15 (DAH) contacts 4-CDP-2-C-methyl-D-erythritol 2-phosphate. 4-CDP-2-C-methyl-D-erythritol 2-phosphate is bound by residues 75–77 (DIG), 149–152 (TTTD), phenylalanine 156, and arginine 159.

It belongs to the IspF family. In terms of assembly, homotrimer. It depends on a divalent metal cation as a cofactor.

The enzyme catalyses 4-CDP-2-C-methyl-D-erythritol 2-phosphate = 2-C-methyl-D-erythritol 2,4-cyclic diphosphate + CMP. The protein operates within isoprenoid biosynthesis; isopentenyl diphosphate biosynthesis via DXP pathway; isopentenyl diphosphate from 1-deoxy-D-xylulose 5-phosphate: step 4/6. Functionally, involved in the biosynthesis of isopentenyl diphosphate (IPP) and dimethylallyl diphosphate (DMAPP), two major building blocks of isoprenoid compounds. Catalyzes the conversion of 4-diphosphocytidyl-2-C-methyl-D-erythritol 2-phosphate (CDP-ME2P) to 2-C-methyl-D-erythritol 2,4-cyclodiphosphate (ME-CPP) with a corresponding release of cytidine 5-monophosphate (CMP). The sequence is that of 2-C-methyl-D-erythritol 2,4-cyclodiphosphate synthase from Bifidobacterium longum subsp. infantis (strain ATCC 15697 / DSM 20088 / JCM 1222 / NCTC 11817 / S12).